The following is a 338-amino-acid chain: Ketol-acid reductoisomerase (NADP(+)) (338 aa).

The KARI N-terminal Rossmann domain occupies 1–181 (MKVFYDKDCD…GGGRAGIIET (181 aa)). NADP(+) is bound by residues 24 to 27 (YGSQ), Arg47, and Ser52. Residue His107 is part of the active site. Gly133 contributes to the NADP(+) binding site. In terms of domain architecture, KARI C-terminal knotted spans 182–327 (NFREETETDL…AKLRAMMPWI (146 aa)). Asp190, Glu194, Glu226, and Glu230 together coordinate Mg(2+). Ser251 serves as a coordination point for substrate.

The protein belongs to the ketol-acid reductoisomerase family. Mg(2+) serves as cofactor.

The catalysed reaction is (2R)-2,3-dihydroxy-3-methylbutanoate + NADP(+) = (2S)-2-acetolactate + NADPH + H(+). It carries out the reaction (2R,3R)-2,3-dihydroxy-3-methylpentanoate + NADP(+) = (S)-2-ethyl-2-hydroxy-3-oxobutanoate + NADPH + H(+). It participates in amino-acid biosynthesis; L-isoleucine biosynthesis; L-isoleucine from 2-oxobutanoate: step 2/4. Its pathway is amino-acid biosynthesis; L-valine biosynthesis; L-valine from pyruvate: step 2/4. In terms of biological role, involved in the biosynthesis of branched-chain amino acids (BCAA). Catalyzes an alkyl-migration followed by a ketol-acid reduction of (S)-2-acetolactate (S2AL) to yield (R)-2,3-dihydroxy-isovalerate. In the isomerase reaction, S2AL is rearranged via a Mg-dependent methyl migration to produce 3-hydroxy-3-methyl-2-ketobutyrate (HMKB). In the reductase reaction, this 2-ketoacid undergoes a metal-dependent reduction by NADPH to yield (R)-2,3-dihydroxy-isovalerate. This Janthinobacterium sp. (strain Marseille) (Minibacterium massiliensis) protein is Ketol-acid reductoisomerase (NADP(+)).